A 252-amino-acid chain; its full sequence is 3-dehydroquinate dehydratase (252 aa).

3-dehydroquinate-binding positions include Ser-21, 46 to 48 (EWR), and Arg-82. His-143 functions as the Proton donor/acceptor in the catalytic mechanism. The Schiff-base intermediate with substrate role is filled by Lys-170. 3-dehydroquinate is bound by residues Arg-213, Ser-232, and Gln-236.

The protein belongs to the type-I 3-dehydroquinase family. As to quaternary structure, homodimer.

It carries out the reaction 3-dehydroquinate = 3-dehydroshikimate + H2O. The protein operates within metabolic intermediate biosynthesis; chorismate biosynthesis; chorismate from D-erythrose 4-phosphate and phosphoenolpyruvate: step 3/7. Functionally, involved in the third step of the chorismate pathway, which leads to the biosynthesis of aromatic amino acids. Catalyzes the cis-dehydration of 3-dehydroquinate (DHQ) and introduces the first double bond of the aromatic ring to yield 3-dehydroshikimate. This Salmonella paratyphi A (strain ATCC 9150 / SARB42) protein is 3-dehydroquinate dehydratase.